Here is a 138-residue protein sequence, read N- to C-terminus: Acidic phospholipase A2 CoaPLA2 (138 aa).

The signal sequence occupies residues 1 to 16 (MRTLWIVAVLLLGVEG). 7 disulfide bridges follow: Cys-42-Cys-131, Cys-44-Cys-60, Cys-59-Cys-111, Cys-65-Cys-138, Cys-66-Cys-104, Cys-73-Cys-97, and Cys-91-Cys-102. 3 residues coordinate Ca(2+): Tyr-43, Gly-45, and Gly-47. Residue His-63 is part of the active site. Asp-64 provides a ligand contact to Ca(2+). The active site involves Asp-105.

The protein belongs to the phospholipase A2 family. Group II subfamily. D49 sub-subfamily. In terms of assembly, homodimer. It depends on Ca(2+) as a cofactor. As to expression, expressed by the venom gland.

The protein resides in the secreted. It catalyses the reaction a 1,2-diacyl-sn-glycero-3-phosphocholine + H2O = a 1-acyl-sn-glycero-3-phosphocholine + a fatty acid + H(+). Functionally, snake venom phospholipase A2 (PLA2) that shows very low inhibition of ADP-induced platelet aggregation in platelet-rich plasma of human, rabbit and guinea pig. Shows edema-inducing activity and myotoxicity. PLA2 catalyzes the calcium-dependent hydrolysis of the 2-acyl groups in 3-sn-phosphoglycerides. This chain is Acidic phospholipase A2 CoaPLA2, found in Crotalus lutosus abyssus (Grand Canyon rattlesnake).